The sequence spans 164 residues: Cyanate hydratase (164 aa).

Active-site residues include arginine 90, glutamate 93, and serine 116.

The protein belongs to the cyanase family.

It carries out the reaction cyanate + hydrogencarbonate + 3 H(+) = NH4(+) + 2 CO2. Catalyzes the reaction of cyanate with bicarbonate to produce ammonia and carbon dioxide. The chain is Cyanate hydratase from Ricinus communis (Castor bean).